We begin with the raw amino-acid sequence, 286 residues long: Bifunctional protein FolD (286 aa).

Residues 165-167, S190, and V231 contribute to the NADP(+) site; that span reads GRS.

Belongs to the tetrahydrofolate dehydrogenase/cyclohydrolase family. As to quaternary structure, homodimer.

The enzyme catalyses (6R)-5,10-methylene-5,6,7,8-tetrahydrofolate + NADP(+) = (6R)-5,10-methenyltetrahydrofolate + NADPH. It catalyses the reaction (6R)-5,10-methenyltetrahydrofolate + H2O = (6R)-10-formyltetrahydrofolate + H(+). Its pathway is one-carbon metabolism; tetrahydrofolate interconversion. Catalyzes the oxidation of 5,10-methylenetetrahydrofolate to 5,10-methenyltetrahydrofolate and then the hydrolysis of 5,10-methenyltetrahydrofolate to 10-formyltetrahydrofolate. The polypeptide is Bifunctional protein FolD (Bacillus cereus (strain G9842)).